The chain runs to 341 residues: Mediator of RNA polymerase II transcription subunit 18 (341 aa).

The tract at residues Lys139–Gln216 is disordered. Residues Glu163–Glu211 are compositionally biased toward basic and acidic residues.

This sequence belongs to the Mediator complex subunit 18 family. As to quaternary structure, component of the Mediator complex.

The protein resides in the nucleus. Its function is as follows. Component of the Mediator complex, a coactivator involved in the regulated transcription of nearly all RNA polymerase II-dependent genes. Mediator functions as a bridge to convey information from gene-specific regulatory proteins to the basal RNA polymerase II transcription machinery. Mediator is recruited to promoters by direct interactions with regulatory proteins and serves as a scaffold for the assembly of a functional preinitiation complex with RNA polymerase II and the general transcription factors. The polypeptide is Mediator of RNA polymerase II transcription subunit 18 (SRB5) (Debaryomyces hansenii (strain ATCC 36239 / CBS 767 / BCRC 21394 / JCM 1990 / NBRC 0083 / IGC 2968) (Yeast)).